Reading from the N-terminus, the 584-residue chain is ETHYLENE INSENSITIVE 3-like 1 protein (584 aa).

Residues 41-74 (YTDDEMDVDELEKRMWRDKMRLKRLKEQQSKCKE) adopt a coiled-coil conformation. A compositionally biased stretch (basic and acidic residues) spans 67–80 (EQQSKCKEGVDGSK). Disordered stretches follow at residues 67–93 (EQQSKCKEGVDGSKQRQSQEQARRKKM) and 565–584 (EGMGKQQQQQQQQQDVSIWF).

Belongs to the EIN3 family. As to quaternary structure, acts as a homodimer to bind the primary ethylene response element.

The protein localises to the nucleus. Functionally, probable transcription factor acting as a positive regulator in the ethylene response pathway. Could bind the primary ethylene response element present in the ETHYLENE-RESPONSE-FACTOR1 promoter. The sequence is that of ETHYLENE INSENSITIVE 3-like 1 protein (EIL1) from Arabidopsis thaliana (Mouse-ear cress).